The following is an 891-amino-acid chain: DNA mismatch repair protein MutS (891 aa).

646 to 653 provides a ligand contact to ATP; it reads GPNMAGKS.

The protein belongs to the DNA mismatch repair MutS family.

This protein is involved in the repair of mismatches in DNA. It is possible that it carries out the mismatch recognition step. This protein has a weak ATPase activity. This chain is DNA mismatch repair protein MutS, found in Rickettsia canadensis (strain McKiel).